Reading from the N-terminus, the 779-residue chain is Probable glutamine--tRNA ligase (779 aa).

ATP contacts are provided by residues 268–270 (EPN) and 274–280 (HIGHAKA). Positions 300 and 440 each coordinate L-glutamine. Residues T459, 488–489 (RL), and 496–498 (LSK) contribute to the ATP site.

It belongs to the class-I aminoacyl-tRNA synthetase family.

The enzyme catalyses tRNA(Gln) + L-glutamine + ATP = L-glutaminyl-tRNA(Gln) + AMP + diphosphate. The sequence is that of Probable glutamine--tRNA ligase (glnS) from Dictyostelium discoideum (Social amoeba).